The sequence spans 303 residues: MSERTHWRDYLALTKPGVVMLLMVTAVAGMFLATEPAGMVPLATFIPAFVGLSLAMMASAAINQIMDQKIDAIMKRTEKRPLVAGKLTPKAAITFAVLLATASMIMLYFLVNPLTAWLTLFGFVGYAFIYTLYLKRATPQNIVIGGIAGAIPPLLGWTAVTGEAHPYAWLLVLIIFVWTPPHFWALAIHRRDEYAKADIPMLPVTHGIPFTRESVLYYTILLFICTLLPYLTGMSDLIYLLSALILGLVFLYHAVRLRFSEDPKLPMKTFGYSITYLFALFTALLVDHYLPVTPANVASWLGA.

A run of 9 helical transmembrane segments spans residues 17–37 (GVVM…TEPA), 42–62 (LATF…SAAI), 91–111 (AAIT…YFLV), 114–134 (LTAW…TLYL), 142–162 (IVIG…AVTG), 168–188 (AWLL…ALAI), 208–228 (IPFT…CTLL), 231–251 (LTGM…LVFL), and 270–290 (FGYS…DHYL).

Belongs to the UbiA prenyltransferase family. Protoheme IX farnesyltransferase subfamily.

It localises to the cell inner membrane. It catalyses the reaction heme b + (2E,6E)-farnesyl diphosphate + H2O = Fe(II)-heme o + diphosphate. It participates in porphyrin-containing compound metabolism; heme O biosynthesis; heme O from protoheme: step 1/1. Converts heme B (protoheme IX) to heme O by substitution of the vinyl group on carbon 2 of heme B porphyrin ring with a hydroxyethyl farnesyl side group. This Alcanivorax borkumensis (strain ATCC 700651 / DSM 11573 / NCIMB 13689 / SK2) protein is Protoheme IX farnesyltransferase.